Here is a 431-residue protein sequence, read N- to C-terminus: Forkhead box protein N2 (431 aa).

The segment at residues 112–208 is a DNA-binding region (fork-head); it reads KPPYSFSLLI…QALKKQPFSS (97 aa). Residues 364–387 are disordered; it reads DSGYASQPCAKISEKGQSGKKMRK.

It localises to the nucleus. Binds to the purine-rich region in HTLV-I LTR. This is Forkhead box protein N2 (FOXN2) from Homo sapiens (Human).